Consider the following 1067-residue polypeptide: Ubiquitin carboxyl-terminal hydrolase 26 (1067 aa).

Basic residues predominate over residues 1–12; that stretch reads MSRPNTRNKNKR. Residues 1 to 22 are disordered; sequence MSRPNTRNKNKRQRPDAVDSSS. A USP domain is found at 106-442; sequence AGLTNLGATC…DAYMLMYSLR (337 aa). The Nucleophile role is filled by Cys-115. Residue His-359 is the Proton acceptor of the active site. Residues 385–418 form a disordered region; sequence KRPCNEASSSTPQSESNGTASSGNITDGIQSGSS. The span at 390–418 shows a compositional bias: polar residues; it reads EASSSTPQSESNGTASSGNITDGIQSGSS. 3 consecutive DUSP domains span residues 503 to 595, 610 to 711, and 738 to 861; these read NALT…GDYC, DSYR…DCTC, and TLKV…SAFI. The 84-residue stretch at 948 to 1031 folds into the Ubiquitin-like domain; that stretch reads FEVDRRTSKR…LWVRDTEMHE (84 aa).

This sequence belongs to the peptidase C19 family. In terms of tissue distribution, expressed in seedlings, roots, stems, leaves and inflorescences.

Its subcellular location is the nucleus. The enzyme catalyses Thiol-dependent hydrolysis of ester, thioester, amide, peptide and isopeptide bonds formed by the C-terminal Gly of ubiquitin (a 76-residue protein attached to proteins as an intracellular targeting signal).. Its function is as follows. Recognizes and hydrolyzes the peptide bond at the C-terminal Gly of ubiquitin. Involved in the processing of poly-ubiquitin precursors as well as that of ubiquitinated proteins. Deubiquitinates H2BK143ub1 of histone H2B. This Arabidopsis thaliana (Mouse-ear cress) protein is Ubiquitin carboxyl-terminal hydrolase 26 (UBP26).